The sequence spans 265 residues: Aquaporin-5 (265 aa).

The Cytoplasmic portion of the chain corresponds to 1 to 12; sequence MKKEVCSLAFFK. A helical membrane pass occupies residues 13 to 33; that stretch reads AVFAEFLATLIFVFFGLGSAL. The Extracellular segment spans residues 34 to 39; sequence KWPSAL. A helical transmembrane segment spans residues 40-60; sequence PTILQISIAFGLAIGTLAQAL. Residues 61–65 lie on the Cytoplasmic side of the membrane; it reads GPVSG. An intramembrane region (discontinuously helical) is located at residues 66–74; that stretch reads GHINPAITL. An NPA 1 motif is present at residues 69-71; sequence NPA. Residues 75 to 87 lie on the Cytoplasmic side of the membrane; sequence ALLIGNQISLLRA. Residues 88–108 form a helical membrane-spanning segment; the sequence is VFYVAAQLVGAIAGAGILYWL. The Extracellular portion of the chain corresponds to 109–126; sequence APLNARGNLAVNALNNNT. N124 carries an N-linked (GlcNAc...) asparagine glycan. A helical transmembrane segment spans residues 127 to 147; that stretch reads TPGKAMVVELILTFQLALCIF. The Cytoplasmic portion of the chain corresponds to 148–158; it reads SSTDSRRTSPV. A helical transmembrane segment spans residues 159-179; sequence GSPALSIGLSVTLGHLVGIYF. A topological domain (extracellular) is located at residue T180. The segment at residues 181–191 is an intramembrane region (discontinuously helical); it reads GCSMNPARSFG. Residues 185–187 carry the NPA 2 motif; sequence NPA. The Extracellular segment spans residues 192-203; sequence PAVVMNRFSPSH. A helical membrane pass occupies residues 204–224; that stretch reads WVFWVGPIVGAMLAAILYFYL. Residues 225-265 lie on the Cytoplasmic side of the membrane; that stretch reads LFPSSLSLHDRVAVVKGTYEPEEDWEDHREERKKTIELTAH.

This sequence belongs to the MIP/aquaporin (TC 1.A.8) family. Homotetramer; each monomer provides an independent water pore. Interacts with TRPV4; the interaction is probably indirect and regulates TRPV4 activation by hypotonicity. As to expression, salivary glands, lacrimal glands, corneal epithelium in eye, trachea and lung.

The protein resides in the apical cell membrane. The protein localises to the cell membrane. It localises to the cytoplasmic vesicle membrane. The catalysed reaction is H2O(in) = H2O(out). Aquaporins form homotetrameric transmembrane channels, with each monomer independently mediating water transport across the plasma membrane along its osmotic gradient. Plays an important role in fluid secretion in salivary glands. Required for TRPV4 activation by hypotonicity. Together with TRPV4, controls regulatory volume decrease in salivary epithelial cells. Seems to play a redundant role in water transport in the eye, lung and in sweat glands. This is Aquaporin-5 from Rattus norvegicus (Rat).